The following is a 134-amino-acid chain: Ribonuclease VapC2 (134 aa).

Residues 3–124 form the PINc domain; that stretch reads YMLDTNICVY…TNNIKEFKRI (122 aa). Position 6 (aspartate 6) interacts with Mg(2+).

Belongs to the PINc/VapC protein family. In terms of assembly, forms complexes with VapB2; probably VapC2(4):VapB2(2) in the absence of DNA, and VapC2(4):VapB2(4) in the presence of DNA. Crystallizes as heterodimers with stoichiometry VapC2(4):VapB2(4) in the presence of its probable promoter DNA. The heterodimers are in contact via alternative VapC-VapC and VapB-VapB interactions. This subunit does not contact DNA. Requires Mg(2+) as cofactor.

Its function is as follows. Toxic component of a type II toxin-antitoxin (TA) system. Has ssRNase activity. Upon expression in E.coli or S.cerevisiae inhibits growth in liquid culture; in S.cerevisiae its expression leads to apoptosis-like characteristics. Rapidly induces apoptosis (within 2 hours) upon microinjection into mouse fibroblasts (L929 line); pretreatment of cells with dexamethasone protects them. Probably contributes to host cell death if bacterial cell lysis occurs during host infection. Its toxic effect is neutralized by coexpression with cognate antitoxin VapB2, its RNase activity is partially inhibited in vitro by VapB2. The chain is Ribonuclease VapC2 from Rickettsia felis (strain ATCC VR-1525 / URRWXCal2) (Rickettsia azadi).